A 66-amino-acid chain; its full sequence is Large ribosomal subunit protein bL33c (66 aa).

The protein belongs to the bacterial ribosomal protein bL33 family.

The protein localises to the plastid. It localises to the chloroplast. This chain is Large ribosomal subunit protein bL33c, found in Cryptomeria japonica (Japanese cedar).